Here is a 189-residue protein sequence, read N- to C-terminus: Thioredoxin-like protein CITRX, chloroplastic (189 aa).

Residues 1-36 (MAMAAAASLLPACAAPTLPGRAFRPRRNSTPTASLS) constitute a chloroplast transit peptide. The region spanning 72–189 (GSGKYIAPDY…MIRNIIDNEL (118 aa)) is the Thioredoxin domain. Active-site nucleophile residues include Cys-112 and Cys-115. Residues Cys-112 and Cys-115 are joined by a disulfide bond.

Belongs to the thioredoxin family. Plant CITRX-type subfamily.

The protein localises to the plastid. Its subcellular location is the chloroplast. Probable thiol-disulfide oxidoreductase that may play a role in proper chloroplast development. This Oryza sativa subsp. indica (Rice) protein is Thioredoxin-like protein CITRX, chloroplastic.